Consider the following 50-residue polypeptide: Protein PsbN (50 aa).

Residues 14–34 traverse the membrane as a helical segment; the sequence is VAVTILAILLALTGFGLWTAF.

The protein belongs to the PsbN family.

It is found in the cellular thylakoid membrane. In terms of biological role, may play a role in photosystem I and II biogenesis. The protein is Protein PsbN of Prochlorococcus marinus (strain MIT 9312).